A 464-amino-acid chain; its full sequence is MVAHRATRRKRASATQLYKTCKLSGTCPEDVVNKIEQKTWADKILQWGSLFTYFGGLGIGTGTGSGGRAGYVPLGSRPSTIVDVTPARPPIVVESVGPTDPSIVTLVEESSVIESGAGIPNFTGSGGFEITSSSTTTPAVLDITPTSSTVHVSSTHITNPLFIDPPVIEAPQTGEVSGNILISTPTSGIHSYEEIPMQTFAVHGSGTEPISSTPIPGFRRIAAPRLYRKAFQQVKVTDPAFLDRPATLVSADNPLFEGTDTSLAFSPSGVAPDPDFMNIVALHRPAFTTRRGGVRFSRLGRKATIQTRRGTQIGARVHYYYDISPIAQAEEIEMQPLLSANNSFDGLYDIYANIDDEAPGLSSQSVATPSAHLPIKPSTLSFASNTTNVTAPLGNVWETPFYSGPDIVLPTGPSTWPFVPQSPYDVTHDVYIQGSSFALWPVYFFRRRRRKRIPYFFADGDVAA.

Positions 1–12 (MVAHRATRRKRA) match the Nuclear localization signal motif. Residues Cys21 and Cys27 are joined by a disulfide bond. The Nuclear localization signal motif lies at 445–453 (FRRRRRKRI).

The protein belongs to the papillomaviridae L2 protein family. As to quaternary structure, interacts with major capsid protein L1. Interacts with E2; this interaction inhibits E2 transcriptional activity but not the DNA replication function E2. Interacts with host GADD45GIP1. Interacts with host HSPA8; this interaction is required for L2 nuclear translocation. Interacts with host importins KPNB2 and KPNB3. Forms a complex with importin alpha2-beta1 heterodimers via interaction with the importin alpha2 adapter. Interacts with host DYNLT1; this interaction is essential for virus intracellular transport during entry. Interacts (via C-terminus) with host retromer subunits VPS35 and VPS29. Post-translationally, highly phosphorylated.

Its subcellular location is the virion. It localises to the host nucleus. The protein localises to the host early endosome. The protein resides in the host Golgi apparatus. Its function is as follows. Minor protein of the capsid that localizes along the inner surface of the virion, within the central cavities beneath the L1 pentamers. Plays a role in capsid stabilization through interaction with the major capsid protein L1. Once the virion enters the host cell, L2 escorts the genomic DNA into the nucleus by promoting escape from the endosomal compartments and traffic through the host Golgi network. Mechanistically, the C-terminus of L2 possesses a cell-penetrating peptide that protudes from the host endosome, interacts with host cytoplasmic retromer cargo and thereby mediates the capsid delivery to the host trans-Golgi network. Plays a role through its interaction with host dynein in the intracellular microtubule-dependent transport of viral capsid toward the nucleus. Mediates the viral genome import into the nucleus through binding to host importins. Once within the nucleus, L2 localizes viral genomes to host PML bodies in order to activate early gene expression for establishment of infection. Later on, promotes late gene expression by interacting with the viral E2 protein and by inhibiting its transcriptional activation functions. During virion assembly, encapsidates the genome by direct interaction with the viral DNA. In Human papillomavirus 56, this protein is Minor capsid protein L2.